The primary structure comprises 482 residues: Aspartyl/glutamyl-tRNA(Asn/Gln) amidotransferase subunit B (482 aa).

This sequence belongs to the GatB/GatE family. GatB subfamily. Heterotrimer of A, B and C subunits.

It catalyses the reaction L-glutamyl-tRNA(Gln) + L-glutamine + ATP + H2O = L-glutaminyl-tRNA(Gln) + L-glutamate + ADP + phosphate + H(+). The catalysed reaction is L-aspartyl-tRNA(Asn) + L-glutamine + ATP + H2O = L-asparaginyl-tRNA(Asn) + L-glutamate + ADP + phosphate + 2 H(+). In terms of biological role, allows the formation of correctly charged Asn-tRNA(Asn) or Gln-tRNA(Gln) through the transamidation of misacylated Asp-tRNA(Asn) or Glu-tRNA(Gln) in organisms which lack either or both of asparaginyl-tRNA or glutaminyl-tRNA synthetases. The reaction takes place in the presence of glutamine and ATP through an activated phospho-Asp-tRNA(Asn) or phospho-Glu-tRNA(Gln). The chain is Aspartyl/glutamyl-tRNA(Asn/Gln) amidotransferase subunit B from Ehrlichia canis (strain Jake).